The chain runs to 171 residues: 3-hydroxydecanoyl-[acyl-carrier-protein] dehydratase (171 aa).

Residue histidine 70 is part of the active site.

The protein belongs to the thioester dehydratase family. FabA subfamily. As to quaternary structure, homodimer.

The protein localises to the cytoplasm. It catalyses the reaction a (3R)-hydroxyacyl-[ACP] = a (2E)-enoyl-[ACP] + H2O. The enzyme catalyses (3R)-hydroxydecanoyl-[ACP] = (2E)-decenoyl-[ACP] + H2O. The catalysed reaction is (2E)-decenoyl-[ACP] = (3Z)-decenoyl-[ACP]. The protein operates within lipid metabolism; fatty acid biosynthesis. Functionally, necessary for the introduction of cis unsaturation into fatty acids. Catalyzes the dehydration of (3R)-3-hydroxydecanoyl-ACP to E-(2)-decenoyl-ACP and then its isomerization to Z-(3)-decenoyl-ACP. Can catalyze the dehydratase reaction for beta-hydroxyacyl-ACPs with saturated chain lengths up to 16:0, being most active on intermediate chain length. The protein is 3-hydroxydecanoyl-[acyl-carrier-protein] dehydratase of Xanthomonas euvesicatoria pv. vesicatoria (strain 85-10) (Xanthomonas campestris pv. vesicatoria).